We begin with the raw amino-acid sequence, 180 residues long: uncharacterized protein (180 aa).

The 64-residue stretch at 17 to 80 (RRSRILHYLM…LIPNMGVRLT (64 aa)) folds into the HTH dtxR-type domain.

Belongs to the DtxR/MntR family.

This is an uncharacterized protein from Aeropyrum pernix (strain ATCC 700893 / DSM 11879 / JCM 9820 / NBRC 100138 / K1).